Consider the following 286-residue polypeptide: Ribosome-inactivating protein momordin I (286 aa).

An N-terminal signal peptide occupies residues Met1–Gly23. Residue Glu183 is part of the active site. N-linked (GlcNAc...) asparagine glycosylation occurs at Asn250. Residues Ala270 to Tyr286 constitute a propeptide, removed in mature form.

It belongs to the ribosome-inactivating protein family. Type 1 RIP subfamily.

The enzyme catalyses Endohydrolysis of the N-glycosidic bond at one specific adenosine on the 28S rRNA.. This chain is Ribosome-inactivating protein momordin I, found in Momordica charantia (Bitter gourd).